The sequence spans 423 residues: Transmembrane protease serine 11E (423 aa).

At 1-18 the chain is on the cytoplasmic side; sequence MYRSCVVRARKRTCVEPW. The chain crosses the membrane as a helical; Signal-anchor for type II membrane protein span at residues 19-39; it reads VIGIISFLSLIVLAVCIGLTV. Residues 40–423 lie on the Extracellular side of the membrane; it reads HYVRYNHRRT…RHWIASNTGI (384 aa). Positions 48–166 constitute an SEA domain; the sequence is RTYNYYSTLS…ESVKIKKINK (119 aa). N-linked (GlcNAc...) asparagine glycans are attached at residues Asn-74, Asn-165, Asn-182, and Asn-223. Intrachain disulfides connect Cys-176-Cys-297, Cys-217-Cys-233, Cys-342-Cys-358, and Cys-369-Cys-398. Residues 192–422 enclose the Peptidase S1 domain; that stretch reads IVGGTPVEEE…FRHWIASNTG (231 aa). Active-site charge relay system residues include His-232 and Asp-277. The Charge relay system role is filled by Ser-373.

The protein belongs to the peptidase S1 family. Forms a heterodimer with SERPINA5 and SERPINE1. N-glycosylated. Expressed in epidermal, oral and male reproductive tissues.

The protein resides in the cell membrane. It localises to the secreted. Its activity is regulated as follows. Inhibited by SERPINA5. In terms of biological role, serine protease which possesses both gelatinolytic and caseinolytic activities. Shows a preference for Arg in the P1 position. In Mus musculus (Mouse), this protein is Transmembrane protease serine 11E (Tmprss11e).